Consider the following 507-residue polypeptide: Maturase K (507 aa).

This sequence belongs to the intron maturase 2 family. MatK subfamily.

The protein resides in the plastid. The protein localises to the chloroplast. Its function is as follows. Usually encoded in the trnK tRNA gene intron. Probably assists in splicing its own and other chloroplast group II introns. The chain is Maturase K from Kalmia procumbens (Alpine azalea).